The chain runs to 138 residues: Putative pre-16S rRNA nuclease (138 aa).

This sequence belongs to the YqgF nuclease family.

It localises to the cytoplasm. Could be a nuclease involved in processing of the 5'-end of pre-16S rRNA. The polypeptide is Putative pre-16S rRNA nuclease (Bacillus pumilus (strain SAFR-032)).